We begin with the raw amino-acid sequence, 89 residues long: UPF0147 protein Saci_0891 (89 aa).

This sequence belongs to the UPF0147 family.

This is UPF0147 protein Saci_0891 from Sulfolobus acidocaldarius (strain ATCC 33909 / DSM 639 / JCM 8929 / NBRC 15157 / NCIMB 11770).